Reading from the N-terminus, the 620-residue chain is Kelch-like protein 8 (620 aa).

A compositionally biased stretch (polar residues) spans Met1–Gln10. Positions Met1–Asp35 are disordered. Ala2 is subject to N-acetylalanine. The span at Ala11–Gln22 shows a compositional bias: basic residues. A compositionally biased stretch (polar residues) spans Gln23 to Ser34. Residues Cys67 to Val134 enclose the BTB domain. In terms of domain architecture, BACK spans Cys169 to Val270. Kelch repeat units lie at residues Val319–Gly366, Lys367–Gly413, Ile415–Asn460, Val462–Gly507, Cys508–Gly554, and Ile556–Cys601.

As to quaternary structure, component of the BCR(KLHL8) E3 ubiquitin ligase complex, at least composed of CUL3, KLHL8 and RBX1. Interacts with RAPSN.

The protein operates within protein modification; protein ubiquitination. Its function is as follows. Substrate-specific adapter of a BCR (BTB-CUL3-RBX1) E3 ubiquitin ligase complex required for The BCR(KLHL8) ubiquitin ligase complex mediates ubiquitination and degradation of RAPSN. This chain is Kelch-like protein 8 (KLHL8), found in Homo sapiens (Human).